Reading from the N-terminus, the 492-residue chain is Cobyric acid synthase (492 aa).

Residues 253–441 (VLKVIAPVYP…LHGLFDTPQA (189 aa)) form the GATase cobBQ-type domain. The Nucleophile role is filled by Cys-334. His-433 is a catalytic residue.

The protein belongs to the CobB/CobQ family. CobQ subfamily.

The protein operates within cofactor biosynthesis; adenosylcobalamin biosynthesis. Catalyzes amidations at positions B, D, E, and G on adenosylcobyrinic A,C-diamide. NH(2) groups are provided by glutamine, and one molecule of ATP is hydrogenolyzed for each amidation. In Azoarcus sp. (strain BH72), this protein is Cobyric acid synthase.